The chain runs to 155 residues: Large ribosomal subunit protein uL13 (155 aa).

Belongs to the universal ribosomal protein uL13 family. In terms of assembly, part of the 50S ribosomal subunit.

Its function is as follows. This protein is one of the early assembly proteins of the 50S ribosomal subunit, although it is not seen to bind rRNA by itself. It is important during the early stages of 50S assembly. In Rickettsia conorii (strain ATCC VR-613 / Malish 7), this protein is Large ribosomal subunit protein uL13.